Here is a 233-residue protein sequence, read N- to C-terminus: Large ribosomal subunit protein uL1 (233 aa).

This sequence belongs to the universal ribosomal protein uL1 family. In terms of assembly, part of the 50S ribosomal subunit.

In terms of biological role, binds directly to 23S rRNA. The L1 stalk is quite mobile in the ribosome, and is involved in E site tRNA release. Protein L1 is also a translational repressor protein, it controls the translation of the L11 operon by binding to its mRNA. The protein is Large ribosomal subunit protein uL1 of Geobacillus stearothermophilus (Bacillus stearothermophilus).